Consider the following 454-residue polypeptide: tRNA modification GTPase MnmE (454 aa).

(6S)-5-formyl-5,6,7,8-tetrahydrofolate is bound by residues R23, E80, and K120. The 162-residue stretch at 216–377 (GMKVVIAGRP…LRNNLKQSMG (162 aa)) folds into the TrmE-type G domain. N226 serves as a coordination point for K(+). Residues 226–231 (NAGKSS), 245–251 (TDIAGTT), 270–273 (DTAG), 335–338 (NKAD), and 358–360 (SAR) each bind GTP. S230 is a binding site for Mg(2+). K(+) is bound by residues T245, I247, and T250. T251 is a Mg(2+) binding site. K454 contacts (6S)-5-formyl-5,6,7,8-tetrahydrofolate.

The protein belongs to the TRAFAC class TrmE-Era-EngA-EngB-Septin-like GTPase superfamily. TrmE GTPase family. In terms of assembly, homodimer. Heterotetramer of two MnmE and two MnmG subunits. K(+) is required as a cofactor.

The protein localises to the cytoplasm. Functionally, exhibits a very high intrinsic GTPase hydrolysis rate. Involved in the addition of a carboxymethylaminomethyl (cmnm) group at the wobble position (U34) of certain tRNAs, forming tRNA-cmnm(5)s(2)U34. The sequence is that of tRNA modification GTPase MnmE from Salmonella paratyphi A (strain ATCC 9150 / SARB42).